The following is a 63-amino-acid chain: MANPKAKMSKSRRDKRRAQFNARTKPATTVNCPNCGEPTLPHRACRHCGHYRGRCVVNKLAKS.

Residues 1–27 are disordered; it reads MANPKAKMSKSRRDKRRAQFNARTKPA. Positions 7-18 are enriched in basic residues; the sequence is KMSKSRRDKRRA.

It belongs to the bacterial ribosomal protein bL32 family.

This chain is Large ribosomal subunit protein bL32, found in Pelodictyon phaeoclathratiforme (strain DSM 5477 / BU-1).